A 478-amino-acid chain; its full sequence is Cytochrome c-552 (478 aa).

The N-terminal stretch at 1-26 is a signal peptide; sequence MTRIKINARRIFSLLIPFFFFTSVHA. His94 lines the heme c pocket. Positions 122, 125, and 126 each coordinate heme. Residues Cys160, Cys163, His164, Cys209, Cys212, and His213 each contribute to the heme c site. Ca(2+)-binding residues include Glu215, Tyr216, Lys261, and Gln263. A substrate-binding site is contributed by Tyr216. His264 is a substrate binding site. Heme c contacts are provided by His275, Cys282, Cys285, His286, His301, Cys314, Cys317, His318, and His393.

Belongs to the cytochrome c-552 family. Ca(2+) is required as a cofactor. Heme c serves as cofactor.

Its subcellular location is the periplasm. It catalyses the reaction 6 Fe(III)-[cytochrome c] + NH4(+) + 2 H2O = 6 Fe(II)-[cytochrome c] + nitrite + 8 H(+). The protein operates within nitrogen metabolism; nitrate reduction (assimilation). Catalyzes the reduction of nitrite to ammonia, consuming six electrons in the process. This Escherichia coli (strain ATCC 8739 / DSM 1576 / NBRC 3972 / NCIMB 8545 / WDCM 00012 / Crooks) protein is Cytochrome c-552.